A 348-amino-acid chain; its full sequence is Protein RecA (348 aa).

69 to 76 (GPESSGKT) lines the ATP pocket.

It belongs to the RecA family.

It is found in the cytoplasm. Functionally, can catalyze the hydrolysis of ATP in the presence of single-stranded DNA, the ATP-dependent uptake of single-stranded DNA by duplex DNA, and the ATP-dependent hybridization of homologous single-stranded DNAs. It interacts with LexA causing its activation and leading to its autocatalytic cleavage. This is Protein RecA from Picosynechococcus sp. (strain ATCC 27264 / PCC 7002 / PR-6) (Agmenellum quadruplicatum).